The sequence spans 105 residues: Antithrombin-III (105 aa).

The first 17 residues, 1-17 (MHLFIGVSLRPLGHGIP), serve as a signal peptide directing secretion. Residues 38–105 (ICIYRNPEKK…MRRTSSCRPS (68 aa)) form a disordered region. Over residues 43–53 (NPEKKPQERRG) the composition is skewed to basic and acidic residues.

This sequence belongs to the serpin family. As to quaternary structure, forms protease inhibiting heterodimer with TMPRSS7. In terms of tissue distribution, plasma.

Its subcellular location is the secreted. It localises to the extracellular space. Its function is as follows. Most important serine protease inhibitor in plasma that regulates the blood coagulation cascade. AT-III inhibits thrombin, matriptase-3/TMPRSS7, as well as factors IXa, Xa and XIa. Its inhibitory activity is greatly enhanced in the presence of heparin. In Gallus gallus (Chicken), this protein is Antithrombin-III (SERPINC1).